Here is a 136-residue protein sequence, read N- to C-terminus: Large ribosomal subunit protein uL16 (136 aa).

Belongs to the universal ribosomal protein uL16 family. In terms of assembly, part of the 50S ribosomal subunit.

Its function is as follows. Binds 23S rRNA and is also seen to make contacts with the A and possibly P site tRNAs. In Proteus mirabilis (strain HI4320), this protein is Large ribosomal subunit protein uL16.